Consider the following 96-residue polypeptide: UPF0235 protein VCM66_0443 (96 aa).

The protein belongs to the UPF0235 family.

The protein is UPF0235 protein VCM66_0443 of Vibrio cholerae serotype O1 (strain M66-2).